A 169-amino-acid chain; its full sequence is Type II secretion system protein H (169 aa).

Residues 1–29 (MRVARLPLLHPHRAAPVVRRQLRGSSLLE) constitute a propeptide, leader sequence. Residue methionine 30 is modified to N-methylmethionine. A helical membrane pass occupies residues 32-52 (LVIALIALAGVLAAAALTGGI).

This sequence belongs to the GSP H family. As to quaternary structure, type II secretion is composed of four main components: the outer membrane complex, the inner membrane complex, the cytoplasmic secretion ATPase and the periplasm-spanning pseudopilus. Interacts with core component XpsG. Interacts with minor pseudopilins XpsI and XpsJ. Post-translationally, cleaved by prepilin peptidase. Methylated by prepilin peptidase at the amino group of the N-terminal phenylalanine once the leader sequence is cleaved by prepilin peptidase.

It is found in the cell inner membrane. Functionally, component of the type II secretion system required for the energy-dependent secretion of extracellular factors such as proteases and toxins from the periplasm. Part of the pseudopilus tip complex that is critical for the recognition and binding of secretion substrates. This is Type II secretion system protein H (xpsH) from Xanthomonas campestris pv. campestris (strain ATCC 33913 / DSM 3586 / NCPPB 528 / LMG 568 / P 25).